Consider the following 25-residue polypeptide: Fructokinase-1 (25 aa).

Belongs to the ROK (NagC/XylR) family. Homodimer. The cofactor is Mg(2+).

The catalysed reaction is D-fructose + ATP = D-fructose 6-phosphate + ADP + H(+). Inhibition by zinc ions (Potential). Inactivated by EDTA. In Lactococcus lactis subsp. lactis (Streptococcus lactis), this protein is Fructokinase-1.